Here is a 649-residue protein sequence, read N- to C-terminus: Protein mitoshell (649 aa).

The segment covering 167-176 (LRSEARKPRP) has biased composition (basic and acidic residues). Disordered regions lie at residues 167–193 (LRSEARKPRPESVVPEESSISSLESGA), 389–414 (HGPSAFSTPNNQIRNNAASKGQEPTS), and 485–512 (ALPSQEIPNAPTPKSSPQSDRPRDVRSY). The segment covering 177–191 (ESVVPEESSISSLES) has biased composition (low complexity). Composition is skewed to polar residues over residues 393 to 414 (AFSTPNNQIRNNAASKGQEPTS) and 485 to 503 (ALPSQEIPNAPTPKSSPQS).

Functionally, required for male meiotic cytokinesis through its involvement in the regulation of mitochondrial aggregation and fusion, astral spindle assembly and contractile ring formation. The polypeptide is Protein mitoshell (Drosophila melanogaster (Fruit fly)).